A 192-amino-acid polypeptide reads, in one-letter code: Probable Brix domain-containing ribosomal biogenesis protein (192 aa).

The 190-residue stretch at 2–191 (RPAAITTSQR…DFRTKDERMK (190 aa)) folds into the Brix domain.

In terms of biological role, probably involved in the biogenesis of the ribosome. The protein is Probable Brix domain-containing ribosomal biogenesis protein of Methanopyrus kandleri (strain AV19 / DSM 6324 / JCM 9639 / NBRC 100938).